The following is a 316-amino-acid chain: Adenine deaminase (316 aa).

3 residues coordinate Zn(2+): His14, His16, and His194. Catalysis depends on Glu197, which acts as the Proton donor. Asp275 is a binding site for Zn(2+). Substrate is bound at residue Asp276.

The protein belongs to the metallo-dependent hydrolases superfamily. Adenosine and AMP deaminases family. Adenine deaminase type 2 subfamily. It depends on Zn(2+) as a cofactor.

It carries out the reaction adenine + H2O + H(+) = hypoxanthine + NH4(+). In terms of biological role, catalyzes the hydrolytic deamination of adenine to hypoxanthine. Plays an important role in the purine salvage pathway and in nitrogen catabolism. The chain is Adenine deaminase from Pseudomonas paraeruginosa (strain DSM 24068 / PA7) (Pseudomonas aeruginosa (strain PA7)).